The sequence spans 374 residues: Aminomethyltransferase (374 aa).

Belongs to the GcvT family. The glycine cleavage system is composed of four proteins: P, T, L and H.

It carries out the reaction N(6)-[(R)-S(8)-aminomethyldihydrolipoyl]-L-lysyl-[protein] + (6S)-5,6,7,8-tetrahydrofolate = N(6)-[(R)-dihydrolipoyl]-L-lysyl-[protein] + (6R)-5,10-methylene-5,6,7,8-tetrahydrofolate + NH4(+). Its function is as follows. The glycine cleavage system catalyzes the degradation of glycine. In Prochlorococcus marinus (strain MIT 9303), this protein is Aminomethyltransferase.